We begin with the raw amino-acid sequence, 401 residues long: E3 ubiquitin-protein ligase DA2 (401 aa).

The segment at 59–102 (CPICFLYYPSLNRSRCCMKSICTECFLQMKNPNSARPTQCPFCK) adopts an RING-type; degenerate zinc-finger fold. Over residues 139–153 (KEMQDDEEKMQKRLE) the composition is skewed to basic and acidic residues. The disordered stretch occupies residues 139 to 164 (KEMQDDEEKMQKRLESCSSSTSAMTG).

Interacts with DA1 (via C-terminus).

It catalyses the reaction S-ubiquitinyl-[E2 ubiquitin-conjugating enzyme]-L-cysteine + [acceptor protein]-L-lysine = [E2 ubiquitin-conjugating enzyme]-L-cysteine + N(6)-ubiquitinyl-[acceptor protein]-L-lysine.. It functions in the pathway protein modification; protein ubiquitination. E3 ubiquitin-protein ligase involved in the regulation of organ and seed size. Acts synergistically with DA1 to regulate seed size. Functions synergistically with DA1 to restrict cell proliferation in the maternal integuments of ovules and developing seeds. Seems to function independently of BB. Possesses E3 ubiquitin-protein ligase activity in vitro. Polyubiquitinates DA1, DAR1 and DAR2, but not DAR3. The polypeptide is E3 ubiquitin-protein ligase DA2 (Arabidopsis thaliana (Mouse-ear cress)).